The chain runs to 350 residues: GTPase Obg (350 aa).

An Obg domain is found at 1–159; sequence MKFIDEAKIT…WELALELKVL (159 aa). The interval 17–43 is disordered; sequence GDGSASFRREKYIPKGGPDGGDGGRGG. Over residues 33–43 the composition is skewed to gly residues; the sequence is GPDGGDGGRGG. In terms of domain architecture, OBG-type G spans 160–334; sequence ADVGLLGMPN…LTYAVMDYLG (175 aa). GTP contacts are provided by residues 166–173, 191–195, 213–216, 284–287, and 315–317; these read GMPNAGKS, FTTLA, DIPG, NKLD, and SAL. Mg(2+)-binding residues include Ser173 and Thr193.

This sequence belongs to the TRAFAC class OBG-HflX-like GTPase superfamily. OBG GTPase family. In terms of assembly, monomer. Requires Mg(2+) as cofactor.

It is found in the cytoplasm. In terms of biological role, an essential GTPase which binds GTP, GDP and possibly (p)ppGpp with moderate affinity, with high nucleotide exchange rates and a fairly low GTP hydrolysis rate. Plays a role in control of the cell cycle, stress response, ribosome biogenesis and in those bacteria that undergo differentiation, in morphogenesis control. This Thiobacillus denitrificans (strain ATCC 25259 / T1) protein is GTPase Obg.